The chain runs to 111 residues: Large ribosomal subunit protein uL22 (111 aa).

The protein belongs to the universal ribosomal protein uL22 family. In terms of assembly, part of the 50S ribosomal subunit.

Its function is as follows. This protein binds specifically to 23S rRNA; its binding is stimulated by other ribosomal proteins, e.g. L4, L17, and L20. It is important during the early stages of 50S assembly. It makes multiple contacts with different domains of the 23S rRNA in the assembled 50S subunit and ribosome. The globular domain of the protein is located near the polypeptide exit tunnel on the outside of the subunit, while an extended beta-hairpin is found that lines the wall of the exit tunnel in the center of the 70S ribosome. In Xylella fastidiosa (strain M23), this protein is Large ribosomal subunit protein uL22.